The chain runs to 429 residues: 3-phosphoshikimate 1-carboxyvinyltransferase (429 aa).

3 residues coordinate 3-phosphoshikimate: K21, S22, and R26. K21 is a binding site for phosphoenolpyruvate. Phosphoenolpyruvate is bound by residues G94 and R122. S167, Q169, D315, and K342 together coordinate 3-phosphoshikimate. A phosphoenolpyruvate-binding site is contributed by Q169. The active-site Proton acceptor is the D315. Phosphoenolpyruvate contacts are provided by R346 and R388.

This sequence belongs to the EPSP synthase family. Monomer.

It is found in the cytoplasm. The catalysed reaction is 3-phosphoshikimate + phosphoenolpyruvate = 5-O-(1-carboxyvinyl)-3-phosphoshikimate + phosphate. The protein operates within metabolic intermediate biosynthesis; chorismate biosynthesis; chorismate from D-erythrose 4-phosphate and phosphoenolpyruvate: step 6/7. Functionally, catalyzes the transfer of the enolpyruvyl moiety of phosphoenolpyruvate (PEP) to the 5-hydroxyl of shikimate-3-phosphate (S3P) to produce enolpyruvyl shikimate-3-phosphate and inorganic phosphate. This Desulforamulus reducens (strain ATCC BAA-1160 / DSM 100696 / MI-1) (Desulfotomaculum reducens) protein is 3-phosphoshikimate 1-carboxyvinyltransferase.